A 128-amino-acid polypeptide reads, in one-letter code: Thor profilin (128 aa).

It belongs to the Asgard profilin family.

The protein resides in the cytoplasm. The protein localises to the cytoskeleton. Has no profilin activity against rabbit actin. The chain is Thor profilin from Thorarchaeota archaeon (strain AB_25).